Here is a 268-residue protein sequence, read N- to C-terminus: Hydroxyethylthiazole kinase (268 aa).

A substrate-binding site is contributed by Met-45. Positions 121 and 167 each coordinate ATP. A substrate-binding site is contributed by Gly-194.

It belongs to the Thz kinase family. It depends on Mg(2+) as a cofactor.

The catalysed reaction is 5-(2-hydroxyethyl)-4-methylthiazole + ATP = 4-methyl-5-(2-phosphooxyethyl)-thiazole + ADP + H(+). The protein operates within cofactor biosynthesis; thiamine diphosphate biosynthesis; 4-methyl-5-(2-phosphoethyl)-thiazole from 5-(2-hydroxyethyl)-4-methylthiazole: step 1/1. Its function is as follows. Catalyzes the phosphorylation of the hydroxyl group of 4-methyl-5-beta-hydroxyethylthiazole (THZ). The chain is Hydroxyethylthiazole kinase from Bacillus cereus (strain ZK / E33L).